Consider the following 994-residue polypeptide: Bifunctional glutamine synthetase adenylyltransferase/adenylyl-removing enzyme (994 aa).

Residues 1–487 are adenylyl removase; the sequence is MVVTKLATQR…LHTKLFYQPL (487 aa). Residues 492–994 are adenylyl transferase; it reads GPTGLEIAHG…KAVVRKVFGS (503 aa).

Belongs to the GlnE family. Mg(2+) serves as cofactor.

The enzyme catalyses [glutamine synthetase]-O(4)-(5'-adenylyl)-L-tyrosine + phosphate = [glutamine synthetase]-L-tyrosine + ADP. It carries out the reaction [glutamine synthetase]-L-tyrosine + ATP = [glutamine synthetase]-O(4)-(5'-adenylyl)-L-tyrosine + diphosphate. In terms of biological role, involved in the regulation of glutamine synthetase GlnA, a key enzyme in the process to assimilate ammonia. When cellular nitrogen levels are high, the C-terminal adenylyl transferase (AT) inactivates GlnA by covalent transfer of an adenylyl group from ATP to specific tyrosine residue of GlnA, thus reducing its activity. Conversely, when nitrogen levels are low, the N-terminal adenylyl removase (AR) activates GlnA by removing the adenylyl group by phosphorolysis, increasing its activity. The regulatory region of GlnE binds the signal transduction protein PII (GlnB) which indicates the nitrogen status of the cell. The polypeptide is Bifunctional glutamine synthetase adenylyltransferase/adenylyl-removing enzyme (Mycobacterium tuberculosis (strain CDC 1551 / Oshkosh)).